The sequence spans 444 residues: U-box domain-containing protein 31 (444 aa).

In terms of domain architecture, U-box spans 59–133 (EIPSVFICPI…YTWFSQKYVL (75 aa)). 2 ARM repeats span residues 301 to 340 (KQVRNLLVRIGAVPQLVDVLPCLDVECLESALFVLDSLCL) and 343 to 382 (EGRIALKDSVNTIPHTVRLLMKVSEKCTNYAISILWSVCK).

The enzyme catalyses S-ubiquitinyl-[E2 ubiquitin-conjugating enzyme]-L-cysteine + [acceptor protein]-L-lysine = [E2 ubiquitin-conjugating enzyme]-L-cysteine + N(6)-ubiquitinyl-[acceptor protein]-L-lysine.. Its pathway is protein modification; protein ubiquitination. In terms of biological role, functions as an E3 ubiquitin ligase. The chain is U-box domain-containing protein 31 (PUB31) from Arabidopsis thaliana (Mouse-ear cress).